The chain runs to 39 residues: Cecropin-D-like peptide (39 aa).

Hemolymph.

The protein localises to the secreted. Its function is as follows. Cecropins have lytic and antibacterial activity against several Gram-positive and Gram-negative bacteria. Has antibacterial activity against the Gram-positive bacteria M.luteus (MIC=34.4 uM), L.monocytogenes (MIC=34.4 uM), and S.lutea (MIC=34.4 uM), and the Gram-negative bacterium E.coli D31 (MIC=8.6 uM). Lacks antibacterial activity against the Gram-positive bacterium B.circulans, and the Gram-negative bacteria E.coli ATCC 25922 and S.typhimurium. Has antifungal activity against A.niger, but lacks antifungal activity against C.albicans, C.wickerhamii, F.oxysporum, P.pastoris, P.tannophilus, S.cerevisiae, T.harzianum, and Z.marxianus. The sequence is that of Cecropin-D-like peptide from Galleria mellonella (Greater wax moth).